The chain runs to 473 residues: Presenilin-B (473 aa).

The tract at residues 1–141 (MSSDNNNDPF…PLLNKKEKDD (141 aa)) is disordered. Over 1 to 164 (MSSDNNNDPF…DDEVSLQDFS (164 aa)) the chain is Cytoplasmic. Over residues 22–46 (RVSTTTSPNRQSINSSPKQSSPKST) the composition is skewed to polar residues. The segment covering 54 to 72 (NIILDLNDNNNDNNNTNNY) has biased composition (low complexity). Residues 79–89 (VDNKNKFENKD) are compositionally biased toward basic and acidic residues. A helical transmembrane segment spans residues 165–185 (SMIVSIIIPVSITMMAVVFFV). The Lumenal segment spans residues 186 to 224 (KYLNNQTLYASTLSYTIAGGSSGGGSGADSITGNSFVDS). Asn190 carries an N-linked (GlcNAc...) asparagine glycan. The chain crosses the membrane as a helical span at residues 225 to 245 (LIVAGIVLGMIIVTTVAFVLL). Topologically, residues 246 to 252 (YKYRCLK) are cytoplasmic. A helical transmembrane segment spans residues 253–273 (ILYGWLFLSVGMMLGSFGTTF). The Lumenal portion of the chain corresponds to 274-286 (FQAMLSAANLPLD). A helical membrane pass occupies residues 287–307 (YITFAFLIFNFTVCGIIGVFW). Tyr308 is a topological domain (cytoplasmic). Residues 309-329 (AHQYVNQLYLVIISVLMAISL) form a helical membrane-spanning segment. Residues 330 to 334 (TRLPQ) lie on the Lumenal side of the membrane. The chain crosses the membrane as a helical span at residues 335-355 (WTIFTLLVIVAIYDLFAVLCP). Residue Asp348 is part of the active site. At 356-389 (RGPLKVLVELSQERNENIPALVYETGKGSDSNLK) the chain is on the cytoplasmic side. Residues 390 to 410 (LGLGDFIFYSLLISRAALVHM) traverse the membrane as a helical segment. Residue Asp394 is part of the active site. Residues 411-413 (SCV) lie on the Lumenal side of the membrane. Residues 414–434 (FSTFIAILTGLFLTLLCLAIF) form a helical membrane-spanning segment. Residues 435–442 (KKALPALP) are Cytoplasmic-facing. Positions 439–441 (PAL) match the PAL motif. Positions 443–463 (ISIFLGILFYYLSNNFLTPFI) form an intramembrane region, helical. At 464–473 (EALTLSQIFV) the chain is on the cytoplasmic side.

The protein belongs to the peptidase A22A family. Homodimer. Component of the gamma-secretase complex, a complex composed of a presenilin homodimer, nicastrin, aph1 and pen2.

It is found in the endoplasmic reticulum membrane. Its subcellular location is the golgi apparatus membrane. In terms of biological role, probable catalytic subunit of the gamma-secretase complex, an endoprotease complex that catalyzes the intramembrane cleavage of integral membrane proteins such as Notch receptors. Requires the other members of the gamma-secretase complex to have a protease activity. This Dictyostelium discoideum (Social amoeba) protein is Presenilin-B (psenB).